The chain runs to 158 residues: uncharacterized protein (158 aa).

Positions 1-21 (MPHTGSQHTLQATPKTAQHTG) are enriched in polar residues. Disordered regions lie at residues 1-89 (MPHT…RVEG) and 107-158 (EEEK…DAKT). Composition is skewed to basic and acidic residues over residues 51–68 (HTEGCHTQKTRMSADKAG) and 107–127 (EEEKASGEARGEDVGSSRESR). Positions 128-137 (QGTAHKSTCM) are enriched in polar residues. Residues 149–158 (EIGKVEDAKT) show a composition bias toward basic and acidic residues.

This is an uncharacterized protein from Encephalitozoon cuniculi (strain GB-M1) (Microsporidian parasite).